The following is a 263-amino-acid chain: Mediator of RNA polymerase II transcription subunit 4 (263 aa).

The stretch at 61-111 (LQLAAEQAGIEKNMDALREQVRKQDEEINQLQRQLKEAEQILATSIFQARQ) forms a coiled coil. 2 disordered regions span residues 209 to 228 (APNQFAWHPSGELHMSMGAG) and 235 to 263 (DTRAHKDASQDDVEVMSTESSSSSSSDSQ). The span at 251-263 (STESSSSSSSDSQ) shows a compositional bias: low complexity.

It belongs to the Mediator complex subunit 4 family. Component of the Mediator complex.

Its subcellular location is the nucleus. Its function is as follows. Component of the Mediator complex, a coactivator involved in the regulated transcription of nearly all RNA polymerase II-dependent genes. Mediator functions as a bridge to convey information from gene-specific regulatory proteins to the basal RNA polymerase II transcription machinery. Mediator is recruited to promoters by direct interactions with regulatory proteins and serves as a scaffold for the assembly of a functional preinitiation complex with RNA polymerase II and the general transcription factors. The sequence is that of Mediator of RNA polymerase II transcription subunit 4 (MED4) from Anopheles gambiae (African malaria mosquito).